Reading from the N-terminus, the 69-residue chain is Cytochrome c oxidase subunit 8A, mitochondrial (69 aa).

A mitochondrion-targeting transit peptide spans 1–25 (MSVLTPLLLRGLTGSARRLPMPCAR). Positions 2–19 (SVLTPLLLRGLTGSARRL) match the SIFI-degron motif. At 26-36 (VHSKPPREQLG) the chain is on the mitochondrial matrix side. A helical membrane pass occupies residues 37–60 (TMDIAIGLTSCFVCFLLPSGWVLS). At 61 to 69 (HLENYKKRE) the chain is on the mitochondrial intermembrane side.

Belongs to the cytochrome c oxidase VIII family. In terms of assembly, component of the cytochrome c oxidase (complex IV, CIV), a multisubunit enzyme composed of 14 subunits. The complex is composed of a catalytic core of 3 subunits MT-CO1, MT-CO2 and MT-CO3, encoded in the mitochondrial DNA, and 11 supernumerary subunits COX4I, COX5A, COX5B, COX6A, COX6B, COX6C, COX7A, COX7B, COX7C, COX8 and NDUFA4, which are encoded in the nuclear genome. The complex exists as a monomer or a dimer and forms supercomplexes (SCs) in the inner mitochondrial membrane with NADH-ubiquinone oxidoreductase (complex I, CI) and ubiquinol-cytochrome c oxidoreductase (cytochrome b-c1 complex, complex III, CIII), resulting in different assemblies (supercomplex SCI(1)III(2)IV(1) and megacomplex MCI(2)III(2)IV(2)). In response to mitochondrial stress, the precursor protein is ubiquitinated by the SIFI complex in the cytoplasm before mitochondrial import, leading to its degradation. Within the SIFI complex, UBR4 initiates ubiquitin chain that are further elongated or branched by KCMF1.

The protein resides in the mitochondrion inner membrane. It functions in the pathway energy metabolism; oxidative phosphorylation. Component of the cytochrome c oxidase, the last enzyme in the mitochondrial electron transport chain which drives oxidative phosphorylation. The respiratory chain contains 3 multisubunit complexes succinate dehydrogenase (complex II, CII), ubiquinol-cytochrome c oxidoreductase (cytochrome b-c1 complex, complex III, CIII) and cytochrome c oxidase (complex IV, CIV), that cooperate to transfer electrons derived from NADH and succinate to molecular oxygen, creating an electrochemical gradient over the inner membrane that drives transmembrane transport and the ATP synthase. Cytochrome c oxidase is the component of the respiratory chain that catalyzes the reduction of oxygen to water. Electrons originating from reduced cytochrome c in the intermembrane space (IMS) are transferred via the dinuclear copper A center (CU(A)) of subunit 2 and heme A of subunit 1 to the active site in subunit 1, a binuclear center (BNC) formed by heme A3 and copper B (CU(B)). The BNC reduces molecular oxygen to 2 water molecules using 4 electrons from cytochrome c in the IMS and 4 protons from the mitochondrial matrix. This chain is Cytochrome c oxidase subunit 8A, mitochondrial (COX8A), found in Nycticebus coucang (Slow loris).